We begin with the raw amino-acid sequence, 475 residues long: MISKKVDTQVVIIGSGPSGYSAAFRCSDLGLNVVLIEQYYSLGGVCLNVGCIPSKYLLHIAKVIKDVKKLSRIGISFEKLDINLKEIQCNQKKIIESFSSGISNLARKRNVRIIFGYAKFLDANSIFVQGEHDSYVVSFNKIVIATGSLSKKLSYIPYDDIRIWNSSFAVSIPSIPKKLLIIGGGIIGLEMATIYSALGSNVDIIDNSHDILPHLDRDVIDIFKRSVNHDYNIFFNSNVIKIVQEKNGLLVHIAENDNKNKRFELYDIILVAIGRVPNTDMLDISKVGLKTDNNGFIKVNEQFCTNIPNIYAIGDVIGQPMLAHKGTHEGHIVAEVISGKKHYFNPFVIPCVSYTEPEIAWVGITENEARKNNINYEVSSVLWNTLGRAVSSQCSEGVTKLIFDKKTNKIIGGCIVGSNAGELLGEISLAIEMGCDAEDLALTIHAHPTLYESINLSAQIFQGTITDLINKKIKK.

FAD is bound by residues 37-46, Lys55, and Ala118; that span reads EQYYSLGGVC. Cys46 and Cys51 form a disulfide bridge. NAD(+) is bound by residues 183-187, Asp206, Val239, and 272-275; these read GGGII and AIGR. Positions 315 and 323 each coordinate FAD. The active-site Proton acceptor is His447.

The protein belongs to the class-I pyridine nucleotide-disulfide oxidoreductase family. In terms of assembly, homodimer. FAD serves as cofactor.

It is found in the cytoplasm. The enzyme catalyses N(6)-[(R)-dihydrolipoyl]-L-lysyl-[protein] + NAD(+) = N(6)-[(R)-lipoyl]-L-lysyl-[protein] + NADH + H(+). Functionally, lipoamide dehydrogenase is a component of the alpha-ketoacid dehydrogenase complexes. The chain is Dihydrolipoyl dehydrogenase (lpdA) from Buchnera aphidicola subsp. Baizongia pistaciae (strain Bp).